The following is a 599-amino-acid chain: Beta-(1--&gt;2)glucan export ATP-binding/permease protein NdvA (599 aa).

Positions 21–301 (TITMCVASVL…ISAFINQTVT (281 aa)) constitute an ABC transmembrane type-1 domain. The next 5 helical transmembrane spans lie at 22-42 (ITMC…PVLF), 55-75 (IFSP…AAVF), 156-176 (MRMS…GQLV), 248-268 (MAST…VTKG), and 276-296 (IAFI…SAFI). One can recognise an ABC transporter domain in the interval 335–569 (IVFDNVTFEF…GGRFSDLLRA (235 aa)). 368 to 375 (GPTGAGKT) provides a ligand contact to ATP.

It belongs to the ABC transporter superfamily. Beta-(1--&gt;2)glucan exporter (TC 3.A.1.108.1) family. Homodimer.

It localises to the cell inner membrane. The catalysed reaction is [(1-&gt;2)-beta-D-glucosyl](n)(in) + ATP + H2O = [(1-&gt;2)-beta-D-glucosyl](n)(out) + ADP + phosphate + H(+). In terms of biological role, involved in beta-(1--&gt;2)glucan export. Transmembrane domains (TMD) form a pore in the inner membrane and the ATP-binding domain (NBD) is responsible for energy generation. This is Beta-(1--&gt;2)glucan export ATP-binding/permease protein NdvA from Brucella suis biovar 1 (strain 1330).